The chain runs to 473 residues: Tyrosine phenol-lyase (473 aa).

K257 is subject to N6-(pyridoxal phosphate)lysine.

Belongs to the beta-eliminating lyase family. In terms of assembly, homotetramer. Pyridoxal 5'-phosphate is required as a cofactor.

The catalysed reaction is L-tyrosine + H2O = phenol + pyruvate + NH4(+). In Intrasporangium calvum (strain ATCC 23552 / DSM 43043 / JCM 3097 / NBRC 12989 / NCIMB 10167 / NRRL B-3866 / 7 KIP), this protein is Tyrosine phenol-lyase.